A 157-amino-acid chain; its full sequence is Transcription elongation factor GreA (157 aa).

The protein belongs to the GreA/GreB family.

Its function is as follows. Necessary for efficient RNA polymerase transcription elongation past template-encoded arresting sites. The arresting sites in DNA have the property of trapping a certain fraction of elongating RNA polymerases that pass through, resulting in locked ternary complexes. Cleavage of the nascent transcript by cleavage factors such as GreA or GreB allows the resumption of elongation from the new 3'terminus. GreA releases sequences of 2 to 3 nucleotides. The sequence is that of Transcription elongation factor GreA from Brucella abortus (strain S19).